The sequence spans 350 residues: Decarboxylase iboD (350 aa).

Belongs to the phosphatidylserine decarboxylase family.

Its pathway is secondary metabolite biosynthesis. Its function is as follows. Decarboxylase; part of the gene cluster that mediates the biosynthesis of the psychoactive metabolites ibotenic acid and muscimol. The first committed step is glutamate hydroxylation by the 2-oxoglutarate-dependent dioxygenase iboH, and the last step is decarboxylation of ibotenic acid to muscimol by the decarboxylase iboD. The order of the intermediate reactions is somewhat ambiguous. IboA likely activates the carboxylic acid at position 5 to introduce an amide bond, and the flavin monooxygenase iboF generates the N-O bond. There are several options for the latter step. One option is that iboF directly hydroxylates the amide nitrogen formed by iboA to produce a hydroxamic acid species. Another option is that iboF hydroxylates an external N-containing compound, whose resulting N-O bond is subsequently introduced into the hydroxyglutamate scaffold. The paralogous PLP-dependent cystathionine gamma-synthase-like enzymes iboG1 and iboG2 are likely involved in substitution of the OH group at position 3 by the O-N moiety. The first cyclic intermediate is most probably tricholomic acid which is likely desaturated to ibotenic acid by the cytochrome P450 monooxygenase iboC. This is Decarboxylase iboD from Amanita muscaria (strain Koide BX008).